A 1755-amino-acid chain; its full sequence is Transposon Ty1-MR1 Gag-Pol polyprotein (1755 aa).

3 stretches are compositionally biased toward polar residues: residues 1–31 (MESQQLSQHSPISHGSACASVTSKEVQTTQD), 46–60 (VSTQANSQQPTTPLS), and 137–168 (VGTHLNTPSPESGNSFPDSSSAKSNMTSTNQH). Disordered regions lie at residues 1 to 88 (MESQ…YPQQ), 137 to 174 (VGTHLNTPSPESGNSFPDSSSAKSNMTSTNQHVRPPPI), and 350 to 420 (QQES…IRGS). The segment at 299–401 (NNGIPINNKV…NSQSRTARAH (103 aa)) is RNA-binding. Over residues 363 to 372 (SPSDEKKDSR) the composition is skewed to basic and acidic residues. Residues 373 to 411 (TYTNTTKPKSITRNSQKPNNSQSRTARAHNVSTFNNSPG) show a composition bias toward polar residues. Asp461 (for protease activity; shared with dimeric partner) is an active-site residue. The interval 583–640 (NVHTSESTRKYPYPFIHRMLAHANAQTIRYSLKNNTITYFNESDVDWSSAIDYQCPDC) is integrase-type zinc finger-like. Positions 660–835 (NSYEPFQYLH…AGLDISTLLP (176 aa)) constitute an Integrase catalytic domain. Residues Asp671 and Asp736 each contribute to the Mg(2+) site. Residues 958-1172 (AVSPTDSTPP…LGGIGDSNAY (215 aa)) form a disordered region. The segment covering 960 to 969 (SPTDSTPPST) has biased composition (low complexity). The segment covering 1005–1015 (STPQISDIEST) has biased composition (polar residues). The segment covering 1038–1053 (ESSHASKSKDFRHSDS) has biased composition (basic and acidic residues). Composition is skewed to polar residues over residues 1054–1082 (YSDNETNHTNVPISSTGGTNNKTVPQTSE) and 1095–1106 (SIDTSSSESNSL). The Bipartite nuclear localization signal motif lies at 1178–1212 (KKRSLEDNETEIKVSRDTWNTKNMRSLEPPRSKKR). Residues 1338-1476 (NNYYITQLDI…DILGLEIKYQ (139 aa)) form the Reverse transcriptase Ty1/copia-type domain. Mg(2+) is bound by residues Asp1346, Asp1427, Asp1428, Asp1610, Glu1652, and Asp1685. The 143-residue stretch at 1610–1752 (DASYGNQPYY…IKTFKLLTNK (143 aa)) folds into the RNase H Ty1/copia-type domain.

As to quaternary structure, the capsid protein forms a homotrimer, from which the VLPs are assembled. The protease is a homodimer, whose active site consists of two apposed aspartic acid residues. Initially, virus-like particles (VLPs) are composed of the structural unprocessed proteins Gag and Gag-Pol, and also contain the host initiator methionine tRNA (tRNA(i)-Met) which serves as a primer for minus-strand DNA synthesis, and a dimer of genomic Ty RNA. Processing of the polyproteins occurs within the particle and proceeds by an ordered pathway, called maturation. First, the protease (PR) is released by autocatalytic cleavage of the Gag-Pol polyprotein yielding capsid protein p45 and a Pol-p154 precursor protein. This cleavage is a prerequisite for subsequent processing of Pol-p154 at the remaining sites to release the mature structural and catalytic proteins. Maturation takes place prior to the RT reaction and is required to produce transposition-competent VLPs.

The protein localises to the cytoplasm. It localises to the nucleus. The catalysed reaction is DNA(n) + a 2'-deoxyribonucleoside 5'-triphosphate = DNA(n+1) + diphosphate. The enzyme catalyses Endonucleolytic cleavage to 5'-phosphomonoester.. Functionally, capsid protein (CA) is the structural component of the virus-like particle (VLP), forming the shell that encapsulates the retrotransposons dimeric RNA genome. The particles are assembled from trimer-clustered units and there are holes in the capsid shells that allow for the diffusion of macromolecules. CA also has nucleocapsid-like chaperone activity, promoting primer tRNA(i)-Met annealing to the multipartite primer-binding site (PBS), dimerization of Ty1 RNA and initiation of reverse transcription. In terms of biological role, the aspartyl protease (PR) mediates the proteolytic cleavages of the Gag and Gag-Pol polyproteins after assembly of the VLP. Its function is as follows. Reverse transcriptase/ribonuclease H (RT) is a multifunctional enzyme that catalyzes the conversion of the retro-elements RNA genome into dsDNA within the VLP. The enzyme displays a DNA polymerase activity that can copy either DNA or RNA templates, and a ribonuclease H (RNase H) activity that cleaves the RNA strand of RNA-DNA heteroduplexes during plus-strand synthesis and hydrolyzes RNA primers. The conversion leads to a linear dsDNA copy of the retrotransposon that includes long terminal repeats (LTRs) at both ends. Integrase (IN) targets the VLP to the nucleus, where a subparticle preintegration complex (PIC) containing at least integrase and the newly synthesized dsDNA copy of the retrotransposon must transit the nuclear membrane. Once in the nucleus, integrase performs the integration of the dsDNA into the host genome. This Saccharomyces cerevisiae (strain ATCC 204508 / S288c) (Baker's yeast) protein is Transposon Ty1-MR1 Gag-Pol polyprotein (TY1B-MR1).